The primary structure comprises 387 residues: UPF0400 protein C337.03 (387 aa).

The region spanning 1-133 (MALTPDTVSS…SLQERFNNAE (133 aa)) is the CID domain. Residues 177–255 (KSYLEKQSDY…IISNLENKES (79 aa)) adopt a coiled-coil conformation. The tract at residues 257–387 (TATSTLTDAG…SSAAGLYGDS (131 aa)) is disordered. Over residues 283 to 297 (SPPSSSPNSDDAYSP) the composition is skewed to low complexity. Residues 298-323 (QVDSYSPSINSVPYTSNIVENPSEDN) show a composition bias toward polar residues. The segment covering 353-365 (NEEESKELPEDSD) has biased composition (acidic residues). Residues 370–379 (DSSPSSDDSS) are compositionally biased toward low complexity. S372 carries the phosphoserine modification.

This sequence belongs to the UPF0400 (RTT103) family.

This chain is UPF0400 protein C337.03, found in Schizosaccharomyces pombe (strain 972 / ATCC 24843) (Fission yeast).